A 3564-amino-acid chain; its full sequence is CUB and sushi domain-containing protein 1 (3564 aa).

Positions 1 to 26 (MTAWRRFQSLLLLLGLLVLCARLLTA) are cleaved as a signal peptide. The Extracellular segment spans residues 27–3487 (AKGQNCGGLV…SHYHGTSSGS (3461 aa)). 10 cysteine pairs are disulfide-bonded: Cys32–Cys58, Cys145–Cys185, Cys171–Cys202, Cys208–Cys234, Cys349–Cys389, Cys375–Cys406, Cys411–Cys437, Cys527–Cys567, Cys553–Cys580, and Cys584–Cys610. Residues 32–140 (CGGLVQGPNG…QGFKALYEVL (109 aa)) form the CUB 1 domain. 2 N-linked (GlcNAc...) asparagine glycosylation sites follow: Asn40 and Asn57. Residues 143–204 (HTCGNPGEIL…WDFPAPFCRA (62 aa)) form the Sushi 1 domain. A CUB 2 domain is found at 208–312 (CGGTLRGTSS…KGFNAQFQVK (105 aa)). A Sushi 2 domain is found at 347-408 (DMCPDPGIPE…WSDHRPICRA (62 aa)). Positions 411–522 (CGSNLRGPSG…PGFKAVYQEI (112 aa)) constitute a CUB 3 domain. Residues 525-582 (GGCGDPGIPAYGKRTGSSFLHGDTLTFECPAAFELVGERVITCQQNNQWSGNKPSCVF) enclose the Sushi 3 domain. The region spanning 584 to 692 (CFFNFTASSG…RGFNITYTTF (109 aa)) is the CUB 4 domain. Residues Asn587 and Asn686 are each glycosylated (N-linked (GlcNAc...) asparagine). The region spanning 695–756 (NECHDPGIPI…WSSTVPRCEA (62 aa)) is the Sushi 4 domain. Intrachain disulfides connect Cys697-Cys738, Cys723-Cys754, Cys758-Cys784, Cys873-Cys913, Cys899-Cys926, and Cys930-Cys956. The CUB 5 domain occupies 758–866 (CGGHLTASSG…IGFLIHYESV (109 aa)). Positions 871–928 (DSCLDPGIPVNGHRHGGDFGIRSTVTFSCDPGYTLSDDEPLVCERNHQWNHALPSCDA) constitute a Sushi 5 domain. In terms of domain architecture, CUB 6 spans 930 to 1040 (CGGYIQGKSG…EGFNITFSEY (111 aa)). Residues Asn955, Asn1015, and Asn1034 are each glycosylated (N-linked (GlcNAc...) asparagine). Positions 1043-1102 (EPCDDPGVPAFSRRIGFHFGVGDSLTFSCFLGYRLEGATKLTCLGGGRRVWSAPLPRCVA) constitute a Sushi 6 domain. Disulfide bonds link Cys1045/Cys1085, Cys1071/Cys1100, and Cys1104/Cys1130. Residues 1104 to 1212 (CGASVKGNEG…QGFQLTYTSF (109 aa)) enclose the CUB 7 domain. N-linked (GlcNAc...) asparagine glycosylation is found at Asn1184 and Asn1197. Residues 1215–1275 (VKCEDPGIPN…WDKPLPSCIA (61 aa)) form the Sushi 7 domain. 12 disulfide bridges follow: Cys1217–Cys1258, Cys1244–Cys1273, Cys1277–Cys1304, Cys1391–Cys1431, Cys1417–Cys1447, Cys1451–Cys1477, Cys1564–Cys1604, Cys1590–Cys1621, Cys1625–Cys1651, Cys1741–Cys1781, Cys1767–Cys1798, and Cys1802–Cys1828. A CUB 8 domain is found at 1277–1386 (CGGQIHAATS…SGFSIQFSTS (110 aa)). In terms of domain architecture, Sushi 8 spans 1389-1449 (ATCNDPGMPQ…WQPDPPTCIA (61 aa)). A glycan (N-linked (GlcNAc...) asparagine) is linked at Asn1399. The CUB 9 domain occupies 1451 to 1559 (CGGNLTGPAG…SGFAIEFKEK (109 aa)). N-linked (GlcNAc...) asparagine glycosylation is found at Asn1454 and Asn1572. Residues 1562 to 1623 (EACFDPGNIM…WDQVLPSCNA (62 aa)) enclose the Sushi 9 domain. The region spanning 1625-1733 (CGGQYTGSEG…RGFHFVYQAV (109 aa)) is the CUB 10 domain. An N-linked (GlcNAc...) asparagine glycan is attached at Asn1644. One can recognise a Sushi 10 domain in the interval 1739 to 1800 (TQCSSVPEPR…WNDTIPSCVV (62 aa)). N-linked (GlcNAc...) asparagine glycosylation is found at Asn1792, Asn1805, and Asn1882. Positions 1802 to 1910 (CSGNFTQRRG…AGFHLEYKTV (109 aa)) constitute a CUB 11 domain. The Sushi 11 domain maps to 1913–1972 (AACQEPALPSNSIKIGDRYMVNDVLSFQCEPGYTLQGRSHISCMPGTVRRWNYPSPLCIA). 3 disulfide bridges follow: Cys1915–Cys1955, Cys1941–Cys1970, and Cys1974–Cys2000. Residues 1974–2082 (CGGTLSTLGG…QGFKLAYQAY (109 aa)) enclose the CUB 12 domain. N-linked (GlcNAc...) asparagine glycosylation is present at Asn2018. Positions 2085 to 2144 (QNCPDPPPFQNGYMINSDYSVGQSVSFECYPGYILIGHPVLTCQHGINRNWNYPFPRCDA) constitute a Sushi 12 domain. 3 cysteine pairs are disulfide-bonded: Cys2087–Cys2127, Cys2113–Cys2142, and Cys2146–Cys2172. One can recognise a CUB 13 domain in the interval 2146–2257 (CGYNVTSQNG…LNFHAFQLKK (112 aa)). Residues Asn2149, Asn2154, and Asn2187 are each glycosylated (N-linked (GlcNAc...) asparagine). Residues 2256–2317 (KKCQPPPAVP…FEGSLPTCEA (62 aa)) enclose the Sushi 13 domain. Intrachain disulfides connect Cys2258–Cys2300, Cys2286–Cys2315, and Cys2319–Cys2347. A CUB 14 domain is found at 2319–2430 (CPANEVRTGS…KGFKIRYAAP (112 aa)). N-linked (GlcNAc...) asparagine glycans are attached at residues Asn2358, Asn2394, Asn2400, Asn2445, Asn2470, and Asn2503. Sushi domains follow at residues 2430–2492 (PYCS…LCQA), 2493–2554 (VSCG…TCKP), 2555–2619 (VACP…SCRV), 2620–2677 (ISCG…RCLA), 2678–2735 (GHCG…VCVP), 2736–2793 (ITCG…TCRV), 2794–2856 (VNCS…KCLA), 2857–2914 (ISCG…HCTG), 2918–2975 (GFCG…VCEA), 2976–3034 (VSCG…DCTI), 3035–3094 (ISCG…VCKA), 3095–3152 (VLCP…QCLP), 3153–3210 (VFCG…TCID), 3214–3272 (NTCP…ECIP), and 3273–3332 (HACR…VCKS). Cystine bridges form between Cys2432–Cys2473, Cys2459–Cys2490, Cys2495–Cys2537, Cys2521–Cys2552, Cys2557–Cys2602, Cys2588–Cys2617, Cys2622–Cys2662, Cys2648–Cys2675, Cys2680–Cys2720, Cys2706–Cys2733, Cys2738–Cys2778, and Cys2764–Cys2791. Residue Asn2605 is glycosylated (N-linked (GlcNAc...) asparagine). N-linked (GlcNAc...) asparagine glycosylation is found at Asn2750 and Asn2761. N-linked (GlcNAc...) asparagine glycosylation occurs at Asn2795. Intrachain disulfides connect Cys2796–Cys2841, Cys2827–Cys2854, Cys2859–Cys2899, Cys2885–Cys2912, Cys2920–Cys2960, Cys2946–Cys2973, Cys2978–Cys3019, Cys3005–Cys3032, Cys3037–Cys3079, Cys3063–Cys3092, Cys3097–Cys3137, Cys3123–Cys3150, Cys3155–Cys3195, Cys3181–Cys3208, Cys3216–Cys3257, Cys3243–Cys3270, Cys3275–Cys3317, and Cys3302–Cys3330. Residue Asn2894 is glycosylated (N-linked (GlcNAc...) asparagine). The N-linked (GlcNAc...) asparagine glycan is linked to Asn2963. N-linked (GlcNAc...) asparagine glycosylation is found at Asn3022 and Asn3056. N-linked (GlcNAc...) asparagine glycosylation occurs at Asn3105. N-linked (GlcNAc...) asparagine glycans are attached at residues Asn3228 and Asn3260. N-linked (GlcNAc...) asparagine glycosylation is found at Asn3339, Asn3379, and Asn3386. The helical transmembrane segment at 3488–3508 (VAAAILVPFFALILSGFAFYL) threads the bilayer. Topologically, residues 3509–3564 (YKHRTRPKVQYNGYAGHENSNGQASFENPMYDTNLKPTEAKAVRFDTTLNTVCTVV) are cytoplasmic.

The protein belongs to the CSMD family. As to expression, weakly expressed in most tissues, except in brain. Expressed at intermediate level in brain, including cerebellum, substantia nigra, hippocampus and fetal brain.

It is found in the membrane. Its function is as follows. Potential suppressor of squamous cell carcinomas. The polypeptide is CUB and sushi domain-containing protein 1 (CSMD1) (Homo sapiens (Human)).